We begin with the raw amino-acid sequence, 107 residues long: Prepilin peptidase-dependent protein C (107 aa).

A propeptide spanning residues 1 to 10 is cleaved from the precursor; sequence MSASLKNQQG. Residue phenylalanine 11 is modified to N-methylphenylalanine. Residues 11–30 form a helical membrane-spanning segment; that stretch reads FSLPEVMLAMVLMVMIVTAL.

It is found in the membrane. Functionally, not yet known. The protein is Prepilin peptidase-dependent protein C (ppdC) of Escherichia coli (strain K12).